A 414-amino-acid chain; its full sequence is Translation initiation factor 2 subunit gamma (414 aa).

The region spanning 7–204 is the tr-type G domain; that stretch reads QPEVNIGLVG…ALQTEIATPD (198 aa). Positions 16–23 are G1; the sequence is GHVDHGKT. Mg(2+)-binding residues include Asp-19, Thr-23, Gly-44, and Ser-46. Residue 19 to 24 participates in GTP binding; sequence DHGKTT. The segment at 44–48 is G2; sequence GISIR. Residues 91–94 form a G3 region; it reads DAPG. GTP contacts are provided by residues 147 to 150 and 182 to 184; these read NKVD and SAE. Residues 147–150 form a G4 region; that stretch reads NKVD. Residues 182–184 are G5; the sequence is SAE.

The protein belongs to the TRAFAC class translation factor GTPase superfamily. Classic translation factor GTPase family. EIF2G subfamily. As to quaternary structure, heterotrimer composed of an alpha, a beta and a gamma chain. Requires Mg(2+) as cofactor.

The enzyme catalyses GTP + H2O = GDP + phosphate + H(+). Functionally, eIF-2 functions in the early steps of protein synthesis by forming a ternary complex with GTP and initiator tRNA. This Halobacterium salinarum (strain ATCC 29341 / DSM 671 / R1) protein is Translation initiation factor 2 subunit gamma.